Here is a 564-residue protein sequence, read N- to C-terminus: Probable diguanylate cyclase DgcQ (564 aa).

A run of 2 helical transmembrane segments spans residues 20 to 40 (LGPGHIVNLCFIVVLLFSTLL) and 360 to 380 (IALTLLWALFTTMLLISWYVI). The GGDEF domain occupies 428–563 (HPFSVIQVDL…GRNRVFASDN (136 aa)). Position 436 (Asp436) interacts with Mg(2+). Residues Asn444, His449, and Asp453 each contribute to the substrate site. Glu479 provides a ligand contact to Mg(2+). Glu479 acts as the Proton acceptor in catalysis.

In terms of assembly, homodimer. It depends on Mg(2+) as a cofactor.

The protein localises to the cell inner membrane. It catalyses the reaction 2 GTP = 3',3'-c-di-GMP + 2 diphosphate. Its pathway is glycan metabolism; bacterial cellulose biosynthesis. It participates in purine metabolism; 3',5'-cyclic di-GMP biosynthesis. Its function is as follows. Catalyzes the synthesis of cyclic-di-GMP (c-di-GMP) via the condensation of 2 GTP molecules. Cyclic-di-GMP is a second messenger which controls cell surface-associated traits in bacteria. Involved in the regulation of cellulose production. In Shigella dysenteriae serotype 1 (strain Sd197), this protein is Probable diguanylate cyclase DgcQ.